The primary structure comprises 159 residues: Large ribosomal subunit protein uL11 (159 aa).

Over residues 137 to 149 the composition is skewed to basic and acidic residues; that stretch reads EGKDPREVQREVD. Residues 137-159 form a disordered region; sequence EGKDPREVQREVDSGAWDKLLGG.

The protein belongs to the universal ribosomal protein uL11 family. Part of the ribosomal stalk of the 50S ribosomal subunit. Interacts with L10 and the large rRNA to form the base of the stalk. L10 forms an elongated spine to which L12 dimers bind in a sequential fashion forming a multimeric L10(L12)X complex.

In terms of biological role, forms part of the ribosomal stalk which helps the ribosome interact with GTP-bound translation factors. This Korarchaeum cryptofilum (strain OPF8) protein is Large ribosomal subunit protein uL11.